The primary structure comprises 162 residues: Ribonuclease H (162 aa).

The RNase H type-1 domain maps to 6-154 (DMKRVEIFTD…ADRLANQGVE (149 aa)). Mg(2+) contacts are provided by Asp15, Glu53, Asp82, and Asp146.

Belongs to the RNase H family. Monomer. Mg(2+) is required as a cofactor.

It localises to the cytoplasm. It carries out the reaction Endonucleolytic cleavage to 5'-phosphomonoester.. Its function is as follows. Endonuclease that specifically degrades the RNA of RNA-DNA hybrids. The protein is Ribonuclease H of Nitrosomonas eutropha (strain DSM 101675 / C91 / Nm57).